The chain runs to 332 residues: GTP 3',8-cyclase (332 aa).

One can recognise a Radical SAM core domain in the interval 9–220 (RFARKVDYLR…DQVRERIAER (212 aa)). Arg18 is a binding site for GTP. Residues Cys25 and Cys29 each coordinate [4Fe-4S] cluster. Tyr31 contributes to the S-adenosyl-L-methionine binding site. Cys32 lines the [4Fe-4S] cluster pocket. Arg67 is a binding site for GTP. Gly71 is an S-adenosyl-L-methionine binding site. Position 98 (Thr98) interacts with GTP. Ser122 contacts S-adenosyl-L-methionine. Residue Lys159 participates in GTP binding. Met193 provides a ligand contact to S-adenosyl-L-methionine. [4Fe-4S] cluster-binding residues include Cys258 and Cys261. 263–265 (RVR) is a binding site for GTP. Residue Cys275 coordinates [4Fe-4S] cluster.

This sequence belongs to the radical SAM superfamily. MoaA family. As to quaternary structure, monomer and homodimer. The cofactor is [4Fe-4S] cluster.

It carries out the reaction GTP + AH2 + S-adenosyl-L-methionine = (8S)-3',8-cyclo-7,8-dihydroguanosine 5'-triphosphate + 5'-deoxyadenosine + L-methionine + A + H(+). It participates in cofactor biosynthesis; molybdopterin biosynthesis. Its function is as follows. Catalyzes the cyclization of GTP to (8S)-3',8-cyclo-7,8-dihydroguanosine 5'-triphosphate. In Pseudomonas syringae pv. syringae (strain B728a), this protein is GTP 3',8-cyclase.